The primary structure comprises 380 residues: MLQTLYDYFWWERLWLPVNLTWADLEDKDGRVYAKASDLYITLPLALLFLVIRYFFELYVATPLAALLNVKEKTRLRAPPNATLEHFYQTSGKQPKQVEVDLLSRQSGLSGRQVERWFRRRRNQDRPSLLKKFREASWRFTYYLIAFVAGMAVTVDKPWFYDLRKVWEGYPIQSIIPSQYWYYMIELSFYWSLLFSIASDVKRKDFKEQIIHHVATIILLCFSWFANYVRAGTLIMALHDASDYLLESAKMFNYAGWKNTCNNLFIVFAIVFIITRLVIMPFWILHCTMIYPLELYPAFFGYYFFNFMMAVLQMLHIFWAYFILRMAHKFITGKLIEDERSDREETESSEGEETAAGAGAKSRLLANGHPILNNNHPKND.

Residues 1 to 40 (MLQTLYDYFWWERLWLPVNLTWADLEDKDGRVYAKASDLY) are Lumenal-facing. Residue Asn19 is glycosylated (N-linked (GlcNAc...) asparagine). A helical transmembrane segment spans residues 41–61 (ITLPLALLFLVIRYFFELYVA). The interval 67–128 (LLNVKEKTRL…RRRRNQDRPS (62 aa)) is homeobox-like. In terms of domain architecture, TLC spans 131 to 332 (KKFREASWRF…ILRMAHKFIT (202 aa)). Transmembrane regions (helical) follow at residues 140-160 (FTYY…KPWF), 175-195 (IIPS…SLLF), 209-229 (QIIH…ANYV), and 264-284 (LFIV…PFWI). The Last loop motif signature appears at 291 to 300 (YPLELYPAFF). A helical membrane pass occupies residues 304–324 (FFNFMMAVLQMLHIFWAYFIL). The Cytoplasmic segment spans residues 325-380 (RMAHKFITGKLIEDERSDREETESSEGEETAAGAGAKSRLLANGHPILNNNHPKND). The disordered stretch occupies residues 340 to 380 (RSDREETESSEGEETAAGAGAKSRLLANGHPILNNNHPKND). At Ser341 the chain carries Phosphoserine. Residues 344-353 (EETESSEGEE) are compositionally biased toward acidic residues. A Phosphothreonine modification is found at Thr346. A phosphoserine mark is found at Ser348 and Ser349.

As to quaternary structure, interacts with ATP6V0C, ASGR1, ASGR2 and SLC22A1/OCT1. Interacts with ELOV1, HSD17B12 and TECR. Interacts with NDUFS2. Interacts with PAQR4; the interaction regulates the stability and activity of CERS2 and is inhibited in presence of ceramides. Post-translationally, acetylated. Deacetylation by SIRT3 increases enzyme activity and promotes mitochondrial ceramide accumulation. In terms of processing, phosphorylated at the C-terminus by CK2, leading to increase the ceramide synthase activity. As to expression, broadly expressed, with highest levels in liver and kidney. In brain is detected in neurons, oligodentrocytes, ependymal cells and epithelial cells of the choroid plexus. In kidney is detected in collecting ducts and to a lesser degree in proximal tubules.

The protein localises to the endoplasmic reticulum membrane. It catalyses the reaction a very long-chain fatty acyl-CoA + a sphingoid base = an N-(very-long-chain fatty acyl)-sphingoid base + CoA + H(+). The catalysed reaction is docosanoyl-CoA + sphinganine = N-docosanoylsphinganine + CoA + H(+). It carries out the reaction tetracosanoyl-CoA + sphinganine = N-tetracosanoylsphinganine + CoA + H(+). The enzyme catalyses hexacosanoyl-CoA + sphinganine = N-hexacosanoylsphinganine + CoA + H(+). It catalyses the reaction (15Z)-tetracosenoyl-CoA + sphinganine = N-(15Z-tetracosenoyl)-sphinganine + CoA + H(+). The catalysed reaction is 2-hydroxytetracosanoyl-CoA + sphinganine = N-(2-hydroxytetracosanoyl)-sphinganine + CoA + H(+). It carries out the reaction 2-hydroxydocosanoyl-CoA + sphinganine = N-(2-hydroxydocosanoyl)-sphinganine + CoA + H(+). The enzyme catalyses 2-hydroxytetracosenoyl-CoA + sphinganine = N-(2-hydroxytetracosenoyl)-sphinganine + CoA + H(+). It catalyses the reaction tetracosenoyl-CoA + sphinganine = an N-tetracosenoylsphinganine + CoA + H(+). The catalysed reaction is hexacosenoyl-CoA + sphinganine = N-hexacosenoylsphinganine + CoA + H(+). It carries out the reaction tetracosanoyl-CoA + sphing-4-enine = N-tetracosanoyl-sphing-4-enine + CoA + H(+). The enzyme catalyses tetracosenoyl-CoA + sphing-4-enine = N-(tetracosenoyl)-sphing-4-enine + CoA + H(+). It catalyses the reaction heptadecasphing-4-enine + tetracosanoyl-CoA = N-tetracosanoyl-heptadecasphing-4-enine + CoA + H(+). The catalysed reaction is a fatty acyl-CoA + sphing-4-enine = an N-acylsphing-4-enine + CoA + H(+). It carries out the reaction sphing-4-enine + hexadecanoyl-CoA = N-hexadecanoylsphing-4-enine + CoA + H(+). The enzyme catalyses sphing-4-enine + octadecanoyl-CoA = N-octadecanoylsphing-4-enine + CoA + H(+). It catalyses the reaction eicosanoyl-CoA + sphing-4-enine = N-eicosanoyl-sphing-4-enine + CoA + H(+). The catalysed reaction is sphinganine + hexadecanoyl-CoA = N-hexadecanoylsphinganine + CoA + H(+). It carries out the reaction sphinganine + octadecanoyl-CoA = N-(octadecanoyl)-sphinganine + CoA + H(+). The enzyme catalyses sphinganine + (9Z)-octadecenoyl-CoA = N-(9Z-octadecenoyl)-sphinganine + CoA + H(+). It catalyses the reaction eicosanoyl-CoA + sphinganine = N-eicosanoylsphinganine + CoA + H(+). It functions in the pathway lipid metabolism; sphingolipid metabolism. Its activity is regulated as follows. Ceramide synthase activity is inhibited by sphingosine-1-phosphate. Ceramide synthase that catalyzes the transfer of the acyl chain from acyl-CoA to a sphingoid base, with high selectivity toward very-long-chain fatty acyl-CoA (chain length C22-C27). N-acylates sphinganine and sphingosine bases to form dihydroceramides and ceramides in de novo synthesis and salvage pathways, respectively. Plays a non-redundant role in the synthesis of ceramides with very-long-chain fatty acids in kidney, liver and brain. Regulates the abundance of myelin-specific sphingolipids galactosylceramide and sulfatide that affects myelin sheath architecture and motor neuron functions. The polypeptide is Ceramide synthase 2 (Mus musculus (Mouse)).